Here is a 139-residue protein sequence, read N- to C-terminus: Mitochondrial intermembrane space import and assembly protein 40 (139 aa).

Intrachain disulfides connect Cys-53-Cys-55, Cys-64-Cys-97, and Cys-74-Cys-87. Residues 61–105 (SGPCGEQFKSAFSCFHYSQEEIKGSDCLDQFRAMQECMQKYPDIY) form the CHCH domain. 2 consecutive short sequence motifs (cx9C motif) follow at residues 64-74 (CGEQFKSAFSC) and 87-97 (CLDQFRAMQEC). Residues 102–139 (PDIYPQEDDEDEAEKEKQNKEAEAFSTETSDTKEESSS) form a disordered region. Over residues 115-124 (EKEKQNKEAE) the composition is skewed to basic and acidic residues.

Monomer. Can form homooligomers.

Its subcellular location is the mitochondrion intermembrane space. Its function is as follows. Central component of a redox-sensitive mitochondrial intermembrane space import machinery which is required for the biogenesis of respiratory chain complexes. Functions as chaperone and catalyzes the formation of disulfide bonds in substrate proteins, such as COX17 or MICU1. Required for the import and folding of small cysteine-containing proteins (small Tim) in the mitochondrial intermembrane space (IMS). Precursor proteins to be imported into the IMS are translocated in their reduced form into the mitochondria. The sequence is that of Mitochondrial intermembrane space import and assembly protein 40 (chchd4) from Xenopus tropicalis (Western clawed frog).